We begin with the raw amino-acid sequence, 199 residues long: Protein GrpE (199 aa).

Residues 1–27 (MSEQNTNHESPEQNVAHDNIEHSDSIL) form a disordered region. Residues 18–27 (DNIEHSDSIL) show a composition bias toward basic and acidic residues.

This sequence belongs to the GrpE family. Homodimer.

It is found in the cytoplasm. Its function is as follows. Participates actively in the response to hyperosmotic and heat shock by preventing the aggregation of stress-denatured proteins, in association with DnaK and GrpE. It is the nucleotide exchange factor for DnaK and may function as a thermosensor. Unfolded proteins bind initially to DnaJ; upon interaction with the DnaJ-bound protein, DnaK hydrolyzes its bound ATP, resulting in the formation of a stable complex. GrpE releases ADP from DnaK; ATP binding to DnaK triggers the release of the substrate protein, thus completing the reaction cycle. Several rounds of ATP-dependent interactions between DnaJ, DnaK and GrpE are required for fully efficient folding. This Psychrobacter sp. (strain St1) protein is Protein GrpE.